The following is a 653-amino-acid chain: Ran-binding protein 9 (653 aa).

Over residues 1–21 (MSGQPPPPPPQQQPPPPPPPA) the composition is skewed to pro residues. A disordered region spans residues 1–62 (MSGQPPPPPP…SAAAPFPHGD (62 aa)). Residues 22 to 57 (SAAAPATAPPGLAVGPGPAAGVPVPGLAAGSSAAAP) show a composition bias toward low complexity. Residues 72–259 (LQRRLKRLYP…VDANFGQHPF (188 aa)) enclose the B30.2/SPRY domain. The region spanning 290 to 322 (WQTMIQKMVSSYLVHHGYCATAEAFARSTDQTV) is the LisH domain. The tract at residues 326–332 (LASIKNR) is interaction with CALB1. The CTLH domain occupies 328–385 (SIKNRQRIQKLVLAGRMGEAIETTQQLYPSLLERNPNLLFTLKVRQFIEMVNGTDSEV). Lysine 330 carries the post-translational modification N6-acetyllysine. Residues 386 to 422 (RCLGGRSPKSQDSYPVSPRPFSSPSMSPSHGMSIHSL) form a disordered region. Low complexity predominate over residues 398–421 (SYPVSPRPFSSPSMSPSHGMSIHS). Residues serine 402 and serine 412 each carry the phosphoserine modification. Residues 539-653 (AAIERMIHFG…AFATVEDYLH (115 aa)) are interaction with FMR1.

This sequence belongs to the RANBP9/10 family. As to quaternary structure, part of a complex consisting of RANBP9, MKLN1 and GID8. Identified in the CTLH complex that contains GID4, RANBP9 and/or RANBP10, MKLN1, MAEA, RMND5A (or alternatively its paralog RMND5B), GID8, ARMC8, WDR26 and YPEL5. Within this complex, MAEA, RMND5A (or alternatively its paralog RMND5B), GID8, WDR26, and RANBP9 and/or RANBP10 form the catalytic core, while GID4, MKLN1, ARMC8 and YPEL5 have ancillary roles. Interacts with GTP-bound Ran, AR, CDC2L1/p110C, CALB1, S100A7, USP11, SOS1 or SOS2, GID8, and FMR1. Interacts with the Dyrk kinases HIPK2, DYRK1A, and DYRK1B. Interacts with TP73 isoform Alpha but not with TP53. Interacts with the HGF receptor MET and the integrins ITGB1 and ITGB2, but not with ITGAL. Part of a complex consisting of RANBP9, RAN, DYRK1B and COPS5. Directly interacts with RANBP10. Interacts with YPEL5. Interacts with MKLN1. Interacts with DDX4. Interacts with NGFR. Interacts with Tex19.1 and, probably, Tex19.2. In terms of processing, phosphorylated in response to stress. Ubiquitinated. Polyubiquitination targets the protein for rapid degradation via the ubiquitin system. In terms of tissue distribution, ubiquitously expressed, with highest levels in maturating spermatocytes.

It localises to the cytoplasm. The protein localises to the cell membrane. Its subcellular location is the nucleus. May act as scaffolding protein, and as adapter protein to couple membrane receptors to intracellular signaling pathways. Acts as a mediator of cell spreading and actin cytoskeleton rearrangement. Core component of the CTLH E3 ubiquitin-protein ligase complex that selectively accepts ubiquitin from UBE2H and mediates ubiquitination and subsequent proteasomal degradation of the transcription factor HBP1. May be involved in signaling of ITGB2/LFA-1 and other integrins. Enhances HGF-MET signaling by recruiting Sos and activating the Ras pathway. Enhances dihydrotestosterone-induced transactivation activity of AR, as well as dexamethasone-induced transactivation activity of NR3C1, but not affect estrogen-induced transactivation. Stabilizes TP73 isoform Alpha, probably by inhibiting its ubiquitination, and increases its proapoptotic activity. Inhibits the kinase activity of DYRK1A and DYRK1B. Inhibits FMR1 binding to RNA. The chain is Ran-binding protein 9 from Mus musculus (Mouse).